Consider the following 246-residue polypeptide: MINDINNFIESKKLSLNSRKSYHYDLKQFYKIIGGHVNSEKLALYQQSLSEFKLTARKRKLSAVNQFLFFLYNRGTLKEFYRLQETEKITLTQTKSQIMDLSNFYQDTDYPSGRLIALLILSLGLTPAEIANLKKADFDTTFNILSIEKSQMKRILKLPENLLPFLLESLEEDGDLVFEHNGKPYSRQWFFNQLTDFLNEKNEQQLTAQLLREQFILKQKENGKTMTELSRLLGLKTPITLERYYR.

Residues 1–72 form the Core-binding (CB) domain; it reads MINDINNFIE…AVNQFLFFLY (72 aa). The 163-residue stretch at 84–246 folds into the Tyr recombinase domain; the sequence is QETEKITLTQ…TPITLERYYR (163 aa). Catalysis depends on residues K149 and R212. Catalysis depends on Y244, which acts as the O-(3'-phospho-DNA)-tyrosine intermediate.

It belongs to the 'phage' integrase family. XerD-like subfamily.

It localises to the cytoplasm. In terms of biological role, putative tyrosine recombinase. Not involved in the cutting and rejoining of the recombining DNA molecules on dif(SL) site. The polypeptide is Tyrosine recombinase XerD-like (Streptococcus agalactiae serotype III (strain NEM316)).